The chain runs to 383 residues: 3-phytase (383 aa).

An N-terminal signal peptide occupies residues 1–26 (MNHSKTLLLTAAAGLMLTCGAVSSQA). Residues 27-30 (KHKL) constitute a propeptide that is removed on maturation. One can recognise a BPP domain in the interval 31 to 362 (SDPYHFTVNA…VPWERIADKI (332 aa)). The disordered stretch occupies residues 364–383 (FHPQVNKQVDPRKMTDRSGK). Residues 372–383 (VDPRKMTDRSGK) are compositionally biased toward basic and acidic residues.

The protein localises to the secreted. The catalysed reaction is 1D-myo-inositol hexakisphosphate + H2O = 1D-myo-inositol 1,2,4,5,6-pentakisphosphate + phosphate. The sequence is that of 3-phytase (phy) from Bacillus sp. (strain DS11).